Here is a 507-residue protein sequence, read N- to C-terminus: Prolyl carboxy peptidase like protein 5 (507 aa).

Residues 1–16 (MNIFISLAILIATTHC) form the signal peptide. The N-linked (GlcNAc...) asparagine glycan is linked to asparagine 125. Serine 172 acts as the Charge relay system in catalysis. N-linked (GlcNAc...) asparagine glycans are attached at residues asparagine 332 and asparagine 407. Residues aspartate 439 and histidine 466 each act as charge relay system in the active site.

The protein belongs to the peptidase S28 family.

The chain is Prolyl carboxy peptidase like protein 5 from Caenorhabditis elegans.